Here is a 1498-residue protein sequence, read N- to C-terminus: Rap guanine nucleotide exchange factor 2 (1498 aa).

Disordered regions lie at residues 40–59 (HVSS…SSSL) and 68–101 (SEAG…SDPL). Residues 83–94 (VDSEDDDDEEDI) show a composition bias toward acidic residues. A nucleoside 3',5'-cyclic phosphate is bound at residue 135 to 252 (AFANMTMSVR…QKVEEEGEIV (118 aa)). Residues 267–380 (KGHIVIKGTS…RLLNIACAAK (114 aa)) enclose the N-terminal Ras-GEF domain. The region spanning 385 to 468 (LMTLTKPSRE…LSITVKTNLF (84 aa)) is the PDZ domain. The residue at position 501 (Ser-501) is a Phosphoserine. Residues 606-692 (PDQVLRVFKA…GRYYLKNNME (87 aa)) form the Ras-associating domain. Thr-644 is modified (phosphothreonine). A Ras-GEF domain is found at 717–944 (STVEVATQLS…SQGSTNATVL (228 aa)). 11 positions are modified to phosphoserine: Ser-806, Ser-930, Ser-933, Ser-1022, Ser-1079, Ser-1088, Ser-1094, Ser-1115, Ser-1119, Ser-1158, and Ser-1175. Positions 1002 to 1048 (PATNTLPKNPGDKKPVKSETSPVAPRAGSQQKAQAQPPPPQPQPQHK) are disordered. Residues 1094–1159 (SLERHKKQAE…RSSIVSNSSF (66 aa)) form a disordered region. Low complexity-rich tracts occupy residues 1110-1124 (SSQL…QSSP) and 1140-1159 (SDSG…NSSF). Disordered stretches follow at residues 1224–1257 (STEE…GSHD), 1304–1371 (TKYN…TKPV), and 1392–1498 (EGRY…VSAV). Polar residues-rich tracts occupy residues 1246–1257 (GSWTSCSSGSHD) and 1306–1330 (YNRQ…SSTG). Positions 1354–1365 (EAESSSVTSVTT) are enriched in low complexity. The span at 1487–1498 (TEEDEDEQVSAV) shows a compositional bias: acidic residues.

This sequence belongs to the RAPGEF2 family. In terms of assembly, found in a complex, at least composed of KIDINS220, MAGI2, NTRK1 and RAPGEF2; the complex is mainly formed at late endosomes in a neuronal growth factor (NGF)-dependent manner. Interacts (via C-terminal domain) with NEDD4 (via WW domains); this interaction leads to ubiquitination and degradation via the proteasome pathway in a cAMP-independent manner. Interacts with MAGI1 (via PDZ domain). Interacts with ADRB1 (via C-terminal PDZ motif); the interaction is direct. Interacts (via Ras-associating domain) with RAP1A (via GTP-bound active form). Interacts weakly with HRAS (via GDP- and GTP-bound forms). Interacts (via C-terminal domain) with MAGI2 (via PDZ and WW domains). Interacts with CDH1, CTNNB1 and TJP1. Ubiquitinated by NEDD4, leading to proteasomal degradation. Post-translationally, phosphorylation by PLK2 promotes its activity.

It is found in the cell junction. It localises to the cytoplasm. Its subcellular location is the perinuclear region. The protein localises to the cell membrane. The protein resides in the late endosome. Functions as a guanine nucleotide exchange factor (GEF), which activates Rap and Ras family of small GTPases by exchanging bound GDP for free GTP in a cAMP-dependent manner. Serves as a link between cell surface receptors and Rap/Ras GTPases in intracellular signaling cascades. Also acts as an effector for Rap1 by direct association with Rap1-GTP thereby leading to the amplification of Rap1-mediated signaling. Shows weak activity on HRAS. It is controversial whether RAPGEF2 binds cAMP and cGMP or not. Its binding to ligand-activated beta-1 adrenergic receptor ADRB1 leads to the Ras activation through the G(s)-alpha signaling pathway. Involved in the cAMP-induced Ras and Erk1/2 signaling pathway that leads to sustained inhibition of long term melanogenesis by reducing dendrite extension and melanin synthesis. Also provides inhibitory signals for cell proliferation of melanoma cells and promotes their apoptosis in a cAMP-independent nanner. Regulates cAMP-induced neuritogenesis by mediating the Rap1/B-Raf/ERK signaling through a pathway that is independent on both PKA and RAPGEF3/RAPGEF4. Involved in neuron migration and in the formation of the major forebrain fiber connections forming the corpus callosum, the anterior commissure and the hippocampal commissure during brain development. Involved in neuronal growth factor (NGF)-induced sustained activation of Rap1 at late endosomes and in brain-derived neurotrophic factor (BDNF)-induced axon outgrowth of hippocampal neurons. Plays a role in the regulation of embryonic blood vessel formation and in the establishment of basal junction integrity and endothelial barrier function. May be involved in the regulation of the vascular endothelial growth factor receptor KDR and cadherin CDH5 expression at allantois endothelial cell-cell junctions. This is Rap guanine nucleotide exchange factor 2 (RAPGEF2) from Canis lupus familiaris (Dog).